We begin with the raw amino-acid sequence, 305 residues long: Probable xyloglucan endotransglucosylase/hydrolase protein 21 (305 aa).

The N-terminal stretch at 1 to 25 (MVSSTLLVMSISLFLGLSILLVVHG) is a signal peptide. The region spanning 26–216 (KDFNQDIDIT…WSQGPFVASF (191 aa)) is the GH16 domain. N46 is a glycosylation site (N-linked (GlcNAc...) asparagine). Catalysis depends on E102, which acts as the Nucleophile. The active-site Proton donor is the E106. E106 contacts xyloglucan. N110 carries an N-linked (GlcNAc...) asparagine glycan. Xyloglucan is bound by residues 119–121 (HTN) and 129–131 (DRE). The N-linked (GlcNAc...) asparagine glycan is linked to N146. Residues 195 to 196 (DW) and G200 each bind xyloglucan. N-linked (GlcNAc...) asparagine glycosylation is found at N206 and N231. 2 disulfides stabilise this stretch: C225/C239 and C282/C296. Over residues 236–253 (TSPCSPGDSTSSSSSSTS) the composition is skewed to low complexity. The tract at residues 236 to 258 (TSPCSPGDSTSSSSSSTSEWFSQ) is disordered. R287 lines the xyloglucan pocket.

This sequence belongs to the glycosyl hydrolase 16 family. XTH group 2 subfamily. In terms of processing, contains at least one intrachain disulfide bond essential for its enzymatic activity. As to expression, predominantly expressed in green siliques.

The protein localises to the secreted. It localises to the cell wall. Its subcellular location is the extracellular space. The protein resides in the apoplast. The enzyme catalyses breaks a beta-(1-&gt;4) bond in the backbone of a xyloglucan and transfers the xyloglucanyl segment on to O-4 of the non-reducing terminal glucose residue of an acceptor, which can be a xyloglucan or an oligosaccharide of xyloglucan.. Its function is as follows. Catalyzes xyloglucan endohydrolysis (XEH) and/or endotransglycosylation (XET). Cleaves and religates xyloglucan polymers, an essential constituent of the primary cell wall, and thereby participates in cell wall construction of growing tissues. The sequence is that of Probable xyloglucan endotransglucosylase/hydrolase protein 21 (XTH21) from Arabidopsis thaliana (Mouse-ear cress).